We begin with the raw amino-acid sequence, 483 residues long: Auxin transporter-like protein 2 (483 aa).

At 1–53 the chain is on the cytoplasmic side; the sequence is MENGEKAAETVVVGNYVEMEKDGKALDIKSKLSDMFWHGGSAYDAWFSCASNQ. Residues 54 to 71 form a helical membrane-spanning segment; that stretch reads VAQVLLTLPYSFSQLGML. At 72-73 the chain is on the extracellular side; sequence SG. The chain crosses the membrane as a helical span at residues 74–94; that stretch reads ILFQLFYGILGSWTAYLISIL. The Cytoplasmic segment spans residues 95-130; it reads YVEYRTRKEREKVNFRNHVIQWFEVLDGLLGKHWRN. A helical membrane pass occupies residues 131-151; the sequence is VGLAFNCTFLLFGSVIQLIAC. At 152–166 the chain is on the extracellular side; that stretch reads ASNIYYINDNLDKRT. Residues 167 to 187 traverse the membrane as a helical segment; that stretch reads WTYIFGACCATTVFIPSFHNY. At 188–190 the chain is on the cytoplasmic side; the sequence is RIW. The chain crosses the membrane as a helical span at residues 191–211; it reads SFLGLLMTTYTAWYLTIASIL. Topologically, residues 212 to 226 are extracellular; that stretch reads HGQVEGVKHSGPSKL. The chain crosses the membrane as a helical span at residues 227 to 247; that stretch reads VLYFTGATNILYTFGGHAVTV. The Cytoplasmic segment spans residues 248–261; it reads EIMHAMWKPQKFKS. The helical transmembrane segment at 262 to 282 threads the bilayer; sequence IYLFATLYVLTLTLPSASAVY. Topologically, residues 283-306 are extracellular; it reads WAFGDLLLNHSNAFALLPKNLYRD. Asparagine 291 carries N-linked (GlcNAc...) asparagine glycosylation. A helical membrane pass occupies residues 307-327; sequence FAVVLMLIHQFITFGFACTPL. Topologically, residues 328 to 350 are cytoplasmic; sequence YFVWEKLIGMHECRSMCKRAAAR. A helical membrane pass occupies residues 351–371; it reads LPVVIPIWFLAIIFPFFGPIN. Topologically, residues 372 to 374 are extracellular; that stretch reads STV. Residues 375 to 395 form a helical membrane-spanning segment; sequence GSLLVSFTVYIIPALAHIFTF. Topologically, residues 396 to 422 are cytoplasmic; the sequence is RSSAARENAVEQPPRFLGRWTGAFTIN. A helical membrane pass occupies residues 423-443; the sequence is AFIVVWVFIVGFGFGGWASMI. Over 444 to 483 the chain is Extracellular; it reads NFVHQIDTFGLFTKCYQCPPPVMVSPPPISHPHFNHTHGL. Asparagine 478 carries N-linked (GlcNAc...) asparagine glycosylation.

This sequence belongs to the amino acid/polyamine transporter 2 family. Amino acid/auxin permease (AAAP) (TC 2.A.18.1) subfamily.

The protein resides in the cell membrane. Carrier protein involved in proton-driven auxin influx. Mediates the formation of auxin gradient from developing leaves (site of auxin biosynthesis) to tips by contributing to the loading of auxin in vascular tissues and facilitating acropetal (base to tip) auxin transport within inner tissues of the root apex, and basipetal (tip to base) auxin transport within outer tissues of the root apex. This chain is Auxin transporter-like protein 2 (LAX2), found in Arabidopsis thaliana (Mouse-ear cress).